An 841-amino-acid chain; its full sequence is Auxin response factor 24 (841 aa).

Residues 109 to 140 (LPEKQQDGNGSGNGNVSKDKVEEEEVVPPAAT) are disordered. The segment at residues 148–250 (FCKTLTASDT…ELRVGVRRAM (103 aa)) is a DNA-binding region (TF-B3). Disordered stretches follow at residues 366–397 (PRPD…KRAR), 663–715 (QDAL…SRSC), and 804–841 (GALN…SENC). Residues 684 to 695 (AQHDSAREKHQS) are compositionally biased toward basic and acidic residues. Composition is skewed to polar residues over residues 701–713 (KNIQ…GSSR) and 830–841 (GLSTPSLNSENC). A PB1 domain is found at 713–797 (RSCKKVHKQG…HKIFIYTREE (85 aa)).

This sequence belongs to the ARF family. Homodimers and heterodimers. In terms of tissue distribution, expressed in roots, culms, leaves and young panicles.

Its subcellular location is the nucleus. Its function is as follows. Auxin response factors (ARFs) are transcriptional factors that bind specifically to the DNA sequence 5'-TGTCTC-3' found in the auxin-responsive promoter elements (AuxREs). This is Auxin response factor 24 (ARF24) from Oryza sativa subsp. japonica (Rice).